A 106-amino-acid chain; its full sequence is Large ribosomal subunit protein uL24 (106 aa).

This sequence belongs to the universal ribosomal protein uL24 family. In terms of assembly, part of the 50S ribosomal subunit.

Functionally, one of two assembly initiator proteins, it binds directly to the 5'-end of the 23S rRNA, where it nucleates assembly of the 50S subunit. One of the proteins that surrounds the polypeptide exit tunnel on the outside of the subunit. The polypeptide is Large ribosomal subunit protein uL24 (Paracidovorax citrulli (strain AAC00-1) (Acidovorax citrulli)).